A 188-amino-acid polypeptide reads, in one-letter code: Elongation factor P (188 aa).

Belongs to the elongation factor P family.

The protein resides in the cytoplasm. It functions in the pathway protein biosynthesis; polypeptide chain elongation. Functionally, involved in peptide bond synthesis. Stimulates efficient translation and peptide-bond synthesis on native or reconstituted 70S ribosomes in vitro. Probably functions indirectly by altering the affinity of the ribosome for aminoacyl-tRNA, thus increasing their reactivity as acceptors for peptidyl transferase. The chain is Elongation factor P from Rickettsia massiliae (strain Mtu5).